Here is a 413-residue protein sequence, read N- to C-terminus: 3-oxoacyl-[acyl-carrier-protein] synthase 2 (413 aa).

Residues 3-412 (KRRVVVTGLG…GTNGSLIFKK (410 aa)) enclose the Ketosynthase family 3 (KS3) domain. Catalysis depends on for beta-ketoacyl synthase activity residues Cys164, His304, and His341.

It belongs to the thiolase-like superfamily. Beta-ketoacyl-ACP synthases family. Homodimer.

It carries out the reaction a fatty acyl-[ACP] + malonyl-[ACP] + H(+) = a 3-oxoacyl-[ACP] + holo-[ACP] + CO2. It catalyses the reaction (9Z)-hexadecenoyl-[ACP] + malonyl-[ACP] + H(+) = 3-oxo-(11Z)-octadecenoyl-[ACP] + holo-[ACP] + CO2. It functions in the pathway lipid metabolism; fatty acid biosynthesis. Functionally, involved in the type II fatty acid elongation cycle. Catalyzes the elongation of a wide range of acyl-ACP by the addition of two carbons from malonyl-ACP to an acyl acceptor. Can efficiently catalyze the conversion of palmitoleoyl-ACP (cis-hexadec-9-enoyl-ACP) to cis-vaccenoyl-ACP (cis-octadec-11-enoyl-ACP), an essential step in the thermal regulation of fatty acid composition. This chain is 3-oxoacyl-[acyl-carrier-protein] synthase 2 (fabF), found in Escherichia coli O157:H7.